A 706-amino-acid polypeptide reads, in one-letter code: Maternal embryonic leucine zipper kinase (706 aa).

The Protein kinase domain maps to 11–265; it reads YAVHDELGSG…VKKLLEHDWL (255 aa). Residues 17 to 25 and Lys40 each bind ATP; that span reads LGSGGFGKV. Asp132 (proton acceptor) is an active-site residue. Disordered regions lie at residues 366-386, 433-493, and 506-555; these read LDKSGLEDDDSDPSSISSSSD, FTGR…SRGP, and SVYT…IGSA. Polar residues-rich tracts occupy residues 447-461 and 506-515; these read SVRSSDSASLGSAAT and SVYTTPNTRP. The KA1 domain maps to 656–705; sequence QETVHGWMTVELEIVRLQMFDKVGIRRKRLKGDAFMYKKVCEKILQMAKI.

This sequence belongs to the protein kinase superfamily. CAMK Ser/Thr protein kinase family. SNF1 subfamily. Post-translationally, may be phosphorylated at Thr-169 by par-4 and/or autophosphorylated which likely results in its activation. Phosphorylation is not required for co-localization with the centrosome.

Its subcellular location is the cytoplasm. It localises to the cytoskeleton. The protein resides in the microtubule organizing center. It is found in the centrosome. The enzyme catalyses L-seryl-[protein] + ATP = O-phospho-L-seryl-[protein] + ADP + H(+). It carries out the reaction L-threonyl-[protein] + ATP = O-phospho-L-threonyl-[protein] + ADP + H(+). In terms of biological role, serine/threonine-protein kinase involved in cell autonomous neuroblast asymmetric divisions that generate one precursor cell and one apoptotic cell by controlling spindle positioning, myosin distribution and the segregation of cell fate determinants. Plays a role in neural fate specification in several dopaminergic linages, acting in concert with ham-1. Involved in phosphorylation of multiple proteins associated with key developmental processes, including the cell cycle, apoptosis, endocytosis, and asymmetric cell division. Promotes cell shedding during embryogenesis, probably through the endocytosis-mediated removal of cell adhesion molecules such as hmp-1 from the cell surface. May act downstream of par-4/strd-1/mop-25 to regulate cell shedding. The chain is Maternal embryonic leucine zipper kinase from Caenorhabditis elegans.